Consider the following 129-residue polypeptide: Glycine cleavage system H protein (129 aa).

Residues 24 to 106 (LVRVGISAFA…HGEGWLLVVR (83 aa)) form the Lipoyl-binding domain. Lys-65 carries the N6-lipoyllysine modification.

This sequence belongs to the GcvH family. In terms of assembly, the glycine cleavage system is composed of four proteins: P, T, L and H. The cofactor is (R)-lipoate.

Functionally, the glycine cleavage system catalyzes the degradation of glycine. The H protein shuttles the methylamine group of glycine from the P protein to the T protein. This is Glycine cleavage system H protein from Prochlorococcus marinus (strain MIT 9303).